The primary structure comprises 500 residues: Probable E3 ubiquitin-protein ligase ARI16 (500 aa).

The tract at residues 74 to 288 (NSNSSSADRE…QGNWNCSPVA (215 aa)) is TRIAD supradomain. The RING-type 1 zinc finger occupies 78-130 (SSADRETGDGDYLVSTPFCSHKFSTTCWSEYLSDALKKNKEQRGLISCLSQDC). Residues cysteine 96, histidine 98, cysteine 125, cysteine 130, cysteine 169, cysteine 174, cysteine 194, cysteine 196, cysteine 201, cysteine 204, histidine 209, cysteine 214, cysteine 241, cysteine 244, cysteine 261, cysteine 263, cysteine 268, cysteine 271, histidine 278, and cysteine 284 each coordinate Zn(2+). The segment at 148 to 214 (EMYENYILES…GLESHRPVSC (67 aa)) adopts an IBR-type zinc-finger fold. The RING-type 2; atypical zinc finger occupies 241 to 271 (CPKCKIPVQQNGDPNYRLINCICSNNFCWIC). The RanBP2-type zinc-finger motif lies at 453-483 (EPGSRWFCDRCTFENSWVDKQCKMCFFPLDY).

Belongs to the RBR family. Ariadne subfamily. Requires Zn(2+) as cofactor. Preferentially expressed in green siliques.

The catalysed reaction is [E2 ubiquitin-conjugating enzyme]-S-ubiquitinyl-L-cysteine + [acceptor protein]-L-lysine = [E2 ubiquitin-conjugating enzyme]-L-cysteine + [acceptor protein]-N(6)-ubiquitinyl-L-lysine.. It functions in the pathway protein modification; protein ubiquitination. Its function is as follows. Might act as an E3 ubiquitin-protein ligase, or as part of E3 complex, which accepts ubiquitin from specific E2 ubiquitin-conjugating enzymes and then transfers it to substrates. This Arabidopsis thaliana (Mouse-ear cress) protein is Probable E3 ubiquitin-protein ligase ARI16 (ARI16).